The following is a 158-amino-acid chain: Lipoprotein signal peptidase (158 aa).

A run of 4 helical transmembrane segments spans residues 7–27, 38–58, 67–87, and 95–115; these read LFWIAAFIAFFVDQLTKYWVV, ILPGIFHFTYVTNTGAAFSLF, WLSLGVSLLLIGLALLGPVLE, and GLILGGAMGNGIDRFALGYVV. Active-site residues include Asp-116 and Asp-132. Residues 125-145 traverse the membrane as a helical segment; it reads FAVFNMADSFISIGIVCLLLA.

It belongs to the peptidase A8 family.

The protein resides in the cell inner membrane. The catalysed reaction is Release of signal peptides from bacterial membrane prolipoproteins. Hydrolyzes -Xaa-Yaa-Zaa-|-(S,diacylglyceryl)Cys-, in which Xaa is hydrophobic (preferably Leu), and Yaa (Ala or Ser) and Zaa (Gly or Ala) have small, neutral side chains.. The protein operates within protein modification; lipoprotein biosynthesis (signal peptide cleavage). In terms of biological role, this protein specifically catalyzes the removal of signal peptides from prolipoproteins. The polypeptide is Lipoprotein signal peptidase (Trichormus variabilis (strain ATCC 29413 / PCC 7937) (Anabaena variabilis)).